A 201-amino-acid chain; its full sequence is Dephospho-CoA kinase (201 aa).

The DPCK domain maps to 6-201 (VMGLTGSIGM…RAIREKNPRG (196 aa)). An ATP-binding site is contributed by 14–19 (GMGKSA).

Belongs to the CoaE family.

The protein resides in the cytoplasm. It catalyses the reaction 3'-dephospho-CoA + ATP = ADP + CoA + H(+). It participates in cofactor biosynthesis; coenzyme A biosynthesis; CoA from (R)-pantothenate: step 5/5. Catalyzes the phosphorylation of the 3'-hydroxyl group of dephosphocoenzyme A to form coenzyme A. In Novosphingobium aromaticivorans (strain ATCC 700278 / DSM 12444 / CCUG 56034 / CIP 105152 / NBRC 16084 / F199), this protein is Dephospho-CoA kinase.